The primary structure comprises 180 residues: ATP-dependent protease subunit HslV (180 aa).

Thr5 is an active-site residue. Positions 165, 168, and 171 each coordinate Na(+).

Belongs to the peptidase T1B family. HslV subfamily. As to quaternary structure, a double ring-shaped homohexamer of HslV is capped on each side by a ring-shaped HslU homohexamer. The assembly of the HslU/HslV complex is dependent on binding of ATP.

The protein resides in the cytoplasm. The catalysed reaction is ATP-dependent cleavage of peptide bonds with broad specificity.. Its activity is regulated as follows. Allosterically activated by HslU binding. In terms of biological role, protease subunit of a proteasome-like degradation complex believed to be a general protein degrading machinery. The chain is ATP-dependent protease subunit HslV from Helicobacter pylori (strain P12).